Reading from the N-terminus, the 463-residue chain is Cysteine--tRNA ligase (463 aa).

Residue Cys29 coordinates Zn(2+). A 'HIGH' region motif is present at residues 31–41 (PTVYDFAHIGN). Positions 227, 252, and 256 each coordinate Zn(2+). A 'KMSKS' region motif is present at residues 285 to 289 (KMSKS). Lys288 is a binding site for ATP.

Belongs to the class-I aminoacyl-tRNA synthetase family. Monomer. It depends on Zn(2+) as a cofactor.

It is found in the cytoplasm. It catalyses the reaction tRNA(Cys) + L-cysteine + ATP = L-cysteinyl-tRNA(Cys) + AMP + diphosphate. This chain is Cysteine--tRNA ligase, found in Rhodopseudomonas palustris (strain BisB5).